The sequence spans 166 residues: Interferon gamma (166 aa).

A signal peptide spans M1–G23. At Q24 the chain carries Pyrrolidone carboxylic acid. N-linked (GlcNAc...) asparagine glycosylation is found at N39 and N106.

It belongs to the type II (or gamma) interferon family. Homodimer. Interacts with IFNGR1 (via extracellular domain); this interaction promotes IFNGR1 dimerization. As to expression, released primarily from activated T lymphocytes.

The protein localises to the secreted. Type II interferon produced by immune cells such as T-cells and NK cells that plays crucial roles in antimicrobial, antiviral, and antitumor responses by activating effector immune cells and enhancing antigen presentation. Primarily signals through the JAK-STAT pathway after interaction with its receptor IFNGR1 to affect gene regulation. Upon IFNG binding, IFNGR1 intracellular domain opens out to allow association of downstream signaling components JAK2, JAK1 and STAT1, leading to STAT1 activation, nuclear translocation and transcription of IFNG-regulated genes. Many of the induced genes are transcription factors such as IRF1 that are able to further drive regulation of a next wave of transcription. Plays a role in class I antigen presentation pathway by inducing a replacement of catalytic proteasome subunits with immunoproteasome subunits. In turn, increases the quantity, quality, and repertoire of peptides for class I MHC loading. Increases the efficiency of peptide generation also by inducing the expression of activator PA28 that associates with the proteasome and alters its proteolytic cleavage preference. Up-regulates as well MHC II complexes on the cell surface by promoting expression of several key molecules such as cathepsins B/CTSB, H/CTSH, and L/CTSL. Participates in the regulation of hematopoietic stem cells during development and under homeostatic conditions by affecting their development, quiescence, and differentiation. The chain is Interferon gamma (IFNG) from Bubalus carabanensis (Swamp type water buffalo).